A 377-amino-acid polypeptide reads, in one-letter code: MLWTRALILELKTNKQSRLLWLLAIPLLISLTLLTYGLVLFSSSGRIDHGDHFHLRERFVLTTEELVTFVVASVVFALTVALFGLGCWKLLQGPKVDRTNIKLANSNPAPQAVVLQADCDHFQVGDHCVFSAEKQHFKQQFKQDFLGKSKFSFRNELYRFCLIGVLISLNLALSMVEIPGIVLPWGSSIQFRFFNTAILFIAIRFVGLLSTSLIAIITPWIHLLLHPVHTPISTVFYMGNDLVVLWIFYFFYYHIFKAEVKQTTTVVNNKEFSQLVNTHKTKVAKALALIPVNLICGFIEGLGFYVGYFLILGKFGSVGHKIFYDSQANRDLINSANVIYFLLTTTTIFSLKYLFELLFFYSVEKGILNISRHFGLY.

Helical transmembrane passes span 21–41, 66–86, 163–183, 197–217, 236–256, 292–312, and 339–359; these read WLLA…LVLF, LVTF…FGLG, IGVL…GIVL, AILF…IAII, FYMG…YHIF, VNLI…FLIL, and IYFL…ELLF.

The protein localises to the cell membrane. This is an uncharacterized protein from Mycoplasma pneumoniae (strain ATCC 29342 / M129 / Subtype 1) (Mycoplasmoides pneumoniae).